We begin with the raw amino-acid sequence, 582 residues long: V-type ATP synthase alpha chain (582 aa).

231–238 (GPFGSGKT) serves as a coordination point for ATP.

The protein belongs to the ATPase alpha/beta chains family.

The enzyme catalyses ATP + H2O + 4 H(+)(in) = ADP + phosphate + 5 H(+)(out). In terms of biological role, produces ATP from ADP in the presence of a proton gradient across the membrane. The V-type alpha chain is a catalytic subunit. This chain is V-type ATP synthase alpha chain, found in Deinococcus deserti (strain DSM 17065 / CIP 109153 / LMG 22923 / VCD115).